A 179-amino-acid polypeptide reads, in one-letter code: Caveolin-1 (179 aa).

S2 is subject to N-acetylserine. The residue at position 2 (S2) is a Phosphoserine. The segment at 2-95 (SGGKYVDSEG…WKASFTTFTV (94 aa)) is required for homooligomerization. Over 2-105 (SGGKYVDSEG…TKYWFYRLLS (104 aa)) the chain is Cytoplasmic. Position 5 is an N6-acetyllysine; alternate (K5). Residue K5 forms a Glycyl lysine isopeptide (Lys-Gly) (interchain with G-Cter in ubiquitin); alternate linkage. Phosphotyrosine is present on Y6. At S9 the chain carries Phosphoserine. Y14 is modified (phosphotyrosine; by ABL1). Y25 carries the post-translational modification Phosphotyrosine. Glycyl lysine isopeptide (Lys-Gly) (interchain with G-Cter in ubiquitin) cross-links involve residues K26 and K30. S37 carries the phosphoserine modification. Residues K39, K48, and K58 each participate in a glycyl lysine isopeptide (Lys-Gly) (interchain with G-Cter in ubiquitin) cross-link. The interaction with CAVIN3 stretch occupies residues 83–95 (DGIWKASFTTFTV). Residues 106-126 (ALFGIPMALIWGIYFAILSFL) constitute an intramembrane region (helical). Residues 127–179 (HIWAVVPCIKSFLIEIQCISRVYSIYVHTFCDPLFEAIGKVFSNIRINMQKEI) lie on the Cytoplasmic side of the membrane. The tract at residues 132–143 (VPCIKSFLIEIQ) is interacts with SPRY1, SPRY2, SPRY3 and SPRY4. S-palmitoyl cysteine attachment occurs at residues C134, C144, and C157. Residues 150–161 (SIYVHTFCDPLF) are interacts with SPRY1, SPRY2, and SPRY4. The tract at residues 168–179 (FSNIRINMQKEI) is interacts with SPRY1, SPRY2, SPRY3 and SPRY4.

This sequence belongs to the caveolin family. Homooligomer. Interacts with GLIPR2. Interacts with NOSTRIN. Interacts with SNAP25 and STX1A. Interacts (via the N-terminus) with DPP4; the interaction is direct. Interacts with CTNNB1, CDH1 and JUP. Interacts with PACSIN2; this interaction induces membrane tubulation. Interacts with SLC7A9. Interacts with BMX and BTK. Interacts with TGFBR1. Interacts with CAVIN3 (via leucine-zipper domain) in a cholesterol-sensitive manner. Interacts with CAVIN1. Interacts with EHD2 in a cholesterol-dependent manner. Forms a ternary complex with UBXN6 and VCP; mediates CAV1 targeting to lysosomes for degradation. Interacts with ABCG1; this interaction regulates ABCG1-mediated cholesterol efflux. Interacts with NEU3; this interaction enhances NEU3 sialidase activity within caveola. Interacts (via C-terminus) with SPRY1, SPRY2 (via C-terminus), SPRY3, and SPRY4. Interacts with IGFBP5; this interaction allows trafficking of IGFBP5 from the plasma membrane to the nucleus. In terms of processing, phosphorylated at Tyr-14 by ABL1 in response to oxidative stress. Ubiquitinated. Undergo monoubiquitination and multi- and/or polyubiquitination. Monoubiquitination of N-terminal lysines promotes integration in a ternary complex with UBXN6 and VCP which promotes oligomeric CAV1 targeting to lysosomes for degradation. Ubiquitinated by ZNRF1; leading to degradation and modulation of the TLR4-mediated immune response.

Its subcellular location is the golgi apparatus membrane. The protein resides in the cell membrane. The protein localises to the membrane. It is found in the caveola. It localises to the membrane raft. Functionally, may act as a scaffolding protein within caveolar membranes. Forms a stable heterooligomeric complex with CAV2 that targets to lipid rafts and drives caveolae formation. Mediates the recruitment of CAVIN proteins (CAVIN1/2/3/4) to the caveolae. Interacts directly with G-protein alpha subunits and can functionally regulate their activity. Involved in the costimulatory signal essential for T-cell receptor (TCR)-mediated T-cell activation. Its binding to DPP4 induces T-cell proliferation and NF-kappa-B activation in a T-cell receptor/CD3-dependent manner. Recruits CTNNB1 to caveolar membranes and may regulate CTNNB1-mediated signaling through the Wnt pathway. Negatively regulates TGFB1-mediated activation of SMAD2/3 by mediating the internalization of TGFBR1 from membrane rafts leading to its subsequent degradation. Binds 20(S)-hydroxycholesterol (20(S)-OHC). In Eulemur macaco macaco (Black lemur), this protein is Caveolin-1 (CAV1).